A 578-amino-acid polypeptide reads, in one-letter code: A-type ATP synthase subunit A (578 aa).

228–235 (GPFGSGKT) contributes to the ATP binding site.

The protein belongs to the ATPase alpha/beta chains family. As to quaternary structure, has multiple subunits with at least A(3), B(3), C, D, E, F, H, I and proteolipid K(x).

It localises to the cell membrane. It catalyses the reaction ATP + H2O + 4 H(+)(in) = ADP + phosphate + 5 H(+)(out). Produces ATP from ADP in the presence of a proton gradient across the membrane. The archaeal alpha chain is a catalytic subunit. Its function is as follows. Component of the A-type ATP synthase that produces ATP from ADP in the presence of a proton gradient across the membrane. The A chain is the catalytic subunit. The chain is A-type ATP synthase subunit A from Methanosarcina barkeri.